The sequence spans 206 residues: GTP cyclohydrolase 1 (206 aa).

The segment covering 1 to 17 (MDAVTPKKDIPRPDSVR) has biased composition (basic and acidic residues). A disordered region spans residues 1-23 (MDAVTPKKDIPRPDSVRRPSQQE). Positions 95, 98, and 166 each coordinate Zn(2+).

This sequence belongs to the GTP cyclohydrolase I family. Toroid-shaped homodecamer, composed of two pentamers of five dimers.

It catalyses the reaction GTP + H2O = 7,8-dihydroneopterin 3'-triphosphate + formate + H(+). The protein operates within cofactor biosynthesis; 7,8-dihydroneopterin triphosphate biosynthesis; 7,8-dihydroneopterin triphosphate from GTP: step 1/1. This Hyphomonas neptunium (strain ATCC 15444) protein is GTP cyclohydrolase 1.